A 245-amino-acid polypeptide reads, in one-letter code: Complement C1q subcomponent subunit C (245 aa).

A signal peptide spans 1–28 (MVVGTSCQPQHGLYLLLLLLALPLRSQA). The Collagen-like domain maps to 31–112 (GCYGIPGMPG…GPPGEPGEEG (82 aa)). 4-hydroxyproline occurs at positions 36, 39, 42, 45, and 63. Positions 42 to 119 (PGTPGKDGHD…EEGRYKQKHQ (78 aa)) are disordered. A 5-hydroxylysine modification is found at Lys75. Residue Lys75 is glycosylated (O-linked (Gal...) hydroxylysine). Pro81, Pro96, Pro99, and Pro105 each carry 4-hydroxyproline. The span at 98–107 (DPGPRGPPGE) shows a compositional bias: pro residues. Residues 115–245 (KQKHQSVFTV…VFSGFLLFPD (131 aa)) enclose the C1q domain. Cys179 and Cys193 are disulfide-bonded.

In terms of assembly, core component of the complement C1 complex, a calcium-dependent complex composed of 1 molecule of the C1Q subcomplex, 2 molecules of C1R and 2 molecules of C1S. The C1Q subcomplex is composed 18 subunits: 3 chains of C1QA, C1QB, and C1QC trimerize to form 6 collagen-like triple helices connected to six globular ligand-recognition modules (C1q domain). Post-translationally, O-linked glycans consist of Glc-Gal disaccharides bound to the oxygen atom of post-translationally added hydroxyl groups.

The protein resides in the secreted. It is found in the cell surface. With respect to regulation, the C1Q subcomplex is inhibited by sulfated molecules, such as triterpenoid sulfates, heparan sulfate, or chondroitin sulfates. Functionally, core component of the complement C1 complex, a multiprotein complex that initiates the classical pathway of the complement system, a cascade of proteins that leads to phagocytosis and breakdown of pathogens and signaling that strengthens the adaptive immune system. The classical complement pathway is initiated by the C1Q subcomplex of the C1 complex, which specifically binds IgG or IgM immunoglobulins complexed with antigens, forming antigen-antibody complexes on the surface of pathogens: C1QA, together with C1QB and C1QC, specifically recognizes and binds the Fc regions of IgG or IgM via its C1q domain. Immunoglobulin-binding activates the proenzyme C1R, which cleaves C1S, initiating the proteolytic cascade of the complement system. The C1Q subcomplex is activated by a hexamer of IgG complexed with antigens, while it is activated by a pentameric IgM. The C1Q subcomplex also recognizes and binds phosphatidylserine exposed on the surface of cells undergoing programmed cell death, possibly promoting activation of the complement system. The polypeptide is Complement C1q subcomponent subunit C (Rattus norvegicus (Rat)).